Consider the following 226-residue polypeptide: Small ribosomal subunit protein uS3 (226 aa).

The KH type-2 domain maps to I39–K107.

The protein belongs to the universal ribosomal protein uS3 family. Part of the 30S ribosomal subunit. Forms a tight complex with proteins S10 and S14.

Its function is as follows. Binds the lower part of the 30S subunit head. Binds mRNA in the 70S ribosome, positioning it for translation. This Pelagibacter ubique (strain HTCC1062) protein is Small ribosomal subunit protein uS3.